The sequence spans 409 residues: MTMEVSKKKGGDFQQCHELIPGLPSELALECLVRVPFQFQSAMRSVCRSWRSLLSDSSFIQERRRCGKTELLLCLVQPLTPPIPASKSVDETLMVDEKKSEDESHPRVFCTPRFGLSVYNAAMSTWHRVAFPEEEQIPLFCECVVLQDAGKILLIGGWDPETLQPTRDVYVLEFAGRKWRRGAPMKESRSFFACASVSPTKVYVAGGHDDQKNALRSAEVYDVEKDEWSSVTPMTEGRDECQGFAVGMGLRFCVLSGYGTESQGRFRSDGEIYDPATDSWSRIDNVWRFPDTSPRGRTAGDFRSSSTLWCFTDTDLQSERRWETNDDSRNLKLDLQSIQLPMTGSSVFAGSLGGESVVMIGGKRESEGEGEGGVMMKMTTEKKMGKWSHHVHIPCDFSTLPFSHASIYV.

The region spanning 17–63 (HELIPGLPSELALECLVRVPFQFQSAMRSVCRSWRSLLSDSSFIQER) is the F-box domain. Kelch repeat units follow at residues 98 to 148 (KKSE…VLQD), 151 to 199 (KILL…SVSP), 201 to 248 (KVYV…AVGM), and 251 to 300 (RFCV…RTAG).

This Arabidopsis thaliana (Mouse-ear cress) protein is F-box/kelch-repeat protein At2g44130.